The following is a 175-amino-acid chain: Large ribosomal subunit protein uL10 (175 aa).

The protein belongs to the universal ribosomal protein uL10 family. As to quaternary structure, part of the ribosomal stalk of the 50S ribosomal subunit. The N-terminus interacts with L11 and the large rRNA to form the base of the stalk. The C-terminus forms an elongated spine to which L12 dimers bind in a sequential fashion forming a multimeric L10(L12)X complex.

Forms part of the ribosomal stalk, playing a central role in the interaction of the ribosome with GTP-bound translation factors. The sequence is that of Large ribosomal subunit protein uL10 from Prochlorococcus marinus (strain MIT 9211).